The following is a 132-amino-acid chain: MVMTDPIADFLTRIRNANMVKHDKLELPASKIKKEIAEILKREGFIRDVEYIEDDNAGTIRVFLKYGATGERVITGLKRISKPGLRVYAKSTEVPKVLNGLGIAIVSTSQGVLTDKEARAKQVGGEVLAYVW.

Belongs to the universal ribosomal protein uS8 family. As to quaternary structure, part of the 30S ribosomal subunit. Contacts proteins S5 and S12.

One of the primary rRNA binding proteins, it binds directly to 16S rRNA central domain where it helps coordinate assembly of the platform of the 30S subunit. The polypeptide is Small ribosomal subunit protein uS8 (Listeria innocua serovar 6a (strain ATCC BAA-680 / CLIP 11262)).